The following is a 67-amino-acid chain: Conotoxin Cl14.2b (67 aa).

Residues 1-20 form the signal peptide; that stretch reads MNVTVMFLVLLLLTMPLTDG. A propeptide spanning residues 21–48 is cleaved from the precursor; that stretch reads FNIRATNGGELFGPVQRDAGNVLDHGFQ.

This sequence belongs to the conotoxin L superfamily. Post-translationally, contains 2 disulfide bonds. As to expression, expressed by the venom duct.

The protein localises to the secreted. Functionally, increases calcium current amplitude through Cav1.2/Cav1.3 channels in rat pancreatic beta-cells, which is a prerequisite for eliciting insulin secretion. Stimulates insulin secretion in NIT-1 insulinoma cell lines. In vivo, significantly decreases mice blood glucose levels as of 45 minutes after treatment, similarly to insulin treatment. Has a potential therapeutic use in endocrinal pathologies such as early stages of type 2 diabetes where the pancreas's capability to produce insulin is still effective. This is Conotoxin Cl14.2b from Californiconus californicus (California cone).